We begin with the raw amino-acid sequence, 160 residues long: Cytochrome c-type biogenesis protein CcmE (160 aa).

Residues 1–8 (MNPRRKKR) are Cytoplasmic-facing. The helical; Signal-anchor for type II membrane protein transmembrane segment at 9–29 (LGIILAIFFGISATVGLMVYA) threads the bilayer. The Periplasmic portion of the chain corresponds to 30–160 (LNQNMDLFYT…TTEQKEGNAQ (131 aa)). 2 residues coordinate heme: histidine 128 and tyrosine 132.

It belongs to the CcmE/CycJ family.

Its subcellular location is the cell inner membrane. In terms of biological role, heme chaperone required for the biogenesis of c-type cytochromes. Transiently binds heme delivered by CcmC and transfers the heme to apo-cytochromes in a process facilitated by CcmF and CcmH. The chain is Cytochrome c-type biogenesis protein CcmE from Vibrio atlanticus (strain LGP32) (Vibrio splendidus (strain Mel32)).